Here is a 331-residue protein sequence, read N- to C-terminus: Geranylgeranyl pyrophosphate synthase dpmaD (331 aa).

Isopentenyl diphosphate-binding residues include K53, R56, and H85. Mg(2+) is bound by residues D92 and D96. R101 serves as a coordination point for dimethylallyl diphosphate. R102 provides a ligand contact to isopentenyl diphosphate. Positions 179, 180, and 213 each coordinate dimethylallyl diphosphate. D216 provides a ligand contact to Mg(2+). Positions 220, 230, and 240 each coordinate dimethylallyl diphosphate.

The protein belongs to the FPP/GGPP synthase family. It depends on Mg(2+) as a cofactor.

The catalysed reaction is isopentenyl diphosphate + dimethylallyl diphosphate = (2E)-geranyl diphosphate + diphosphate. The enzyme catalyses isopentenyl diphosphate + (2E)-geranyl diphosphate = (2E,6E)-farnesyl diphosphate + diphosphate. It catalyses the reaction isopentenyl diphosphate + (2E,6E)-farnesyl diphosphate = (2E,6E,10E)-geranylgeranyl diphosphate + diphosphate. The protein operates within secondary metabolite biosynthesis; terpenoid biosynthesis. Its function is as follows. Geranylgeranyl pyrophosphate synthase; part of the gene cluster that mediates the biosynthesis of the diterpenoid pyrones subglutinols A and B. The first step of the pathway is the synthesis of the alpha-pyrone moiety by the polyketide synthase dpmaA via condensation of one acetyl-CoA starter unit with 3 malonyl-CoA units and 2 methylations. The alpha-pyrone is then combined with geranylgeranyl pyrophosphate (GGPP) formed by the GGPP synthase dpmaD through the action of the prenyltransferase dpmaC to yield a linear alpha-pyrone diterpenoid. Subsequent steps in the diterpenoid pyrone biosynthetic pathway involve the decalin core formation, which is initiated by the epoxidation of the C10-C11 olefin by the FAD-dependent oxidoreductase dpmaE, and is followed by a cyclization cascade catalyzed by the terpene cyclase dpmaB. The dehydrogenase dpmaF is then involved in tetrahydrofuran (THF) ring formation at the C5 unit to complete the formation of subglutinols A and B. This Metarhizium anisopliae (Entomophthora anisopliae) protein is Geranylgeranyl pyrophosphate synthase dpmaD.